We begin with the raw amino-acid sequence, 626 residues long: Kinesin-like protein Klp59C (626 aa).

The globular stretch occupies residues methionine 1–isoleucine 183. Residues cysteine 68–asparagine 155 are disordered. The span at asparagine 72–leucine 96 shows a compositional bias: polar residues. A compositionally biased stretch (low complexity) spans alanine 101–proline 112. Basic and acidic residues predominate over residues valine 113–aspartate 150. Residues glutamate 115–aspartate 150 adopt a coiled-coil conformation. The Kinesin motor domain occupies glutamine 187–leucine 521. Glycine 277 to threonine 284 is a binding site for ATP. Residues alanine 557–glutamate 608 are disordered.

It belongs to the TRAFAC class myosin-kinesin ATPase superfamily. Kinesin family. MCAK/KIF2 subfamily.

It localises to the chromosome. It is found in the centromere. The protein localises to the kinetochore. Its subcellular location is the cytoplasm. The protein resides in the cytoskeleton. It localises to the spindle pole. Required during anaphase to drive sister chromatid separation to actively depolymerize kinetochore microtubules at their kinetochore-associated plus ends, thereby contributing to chromatid mobility through a 'Pac-man' mechanism. In Drosophila melanogaster (Fruit fly), this protein is Kinesin-like protein Klp59C (Klp59C).